We begin with the raw amino-acid sequence, 342 residues long: Anthranilate phosphoribosyltransferase (342 aa).

5-phospho-alpha-D-ribose 1-diphosphate-binding positions include Gly-83, 86–87, Thr-91, 93–96, 111–119, and Ser-123; these read GD, NIST, and KHGNRGVSS. Residue Gly-83 coordinates anthranilate. Ser-95 is a Mg(2+) binding site. Residue Asn-114 coordinates anthranilate. Arg-169 contacts anthranilate. Asp-228 and Glu-229 together coordinate Mg(2+).

The protein belongs to the anthranilate phosphoribosyltransferase family. In terms of assembly, homodimer. Requires Mg(2+) as cofactor.

The catalysed reaction is N-(5-phospho-beta-D-ribosyl)anthranilate + diphosphate = 5-phospho-alpha-D-ribose 1-diphosphate + anthranilate. Its pathway is amino-acid biosynthesis; L-tryptophan biosynthesis; L-tryptophan from chorismate: step 2/5. Functionally, catalyzes the transfer of the phosphoribosyl group of 5-phosphorylribose-1-pyrophosphate (PRPP) to anthranilate to yield N-(5'-phosphoribosyl)-anthranilate (PRA). The polypeptide is Anthranilate phosphoribosyltransferase (Paraburkholderia phymatum (strain DSM 17167 / CIP 108236 / LMG 21445 / STM815) (Burkholderia phymatum)).